A 312-amino-acid polypeptide reads, in one-letter code: tRNA pseudouridine synthase B (312 aa).

Catalysis depends on D38, which acts as the Nucleophile.

Belongs to the pseudouridine synthase TruB family. Type 1 subfamily.

It carries out the reaction uridine(55) in tRNA = pseudouridine(55) in tRNA. In terms of biological role, responsible for synthesis of pseudouridine from uracil-55 in the psi GC loop of transfer RNAs. The polypeptide is tRNA pseudouridine synthase B (Syntrophus aciditrophicus (strain SB)).